We begin with the raw amino-acid sequence, 120 residues long: Large ribosomal subunit protein bL19 (120 aa).

It belongs to the bacterial ribosomal protein bL19 family.

This protein is located at the 30S-50S ribosomal subunit interface and may play a role in the structure and function of the aminoacyl-tRNA binding site. This is Large ribosomal subunit protein bL19 from Chlorobium phaeobacteroides (strain DSM 266 / SMG 266 / 2430).